Consider the following 467-residue polypeptide: Tyrosine phenol-lyase (467 aa).

Lys268 carries the post-translational modification N6-(pyridoxal phosphate)lysine.

It belongs to the beta-eliminating lyase family. As to quaternary structure, homotetramer. Pyridoxal 5'-phosphate is required as a cofactor.

The catalysed reaction is L-tyrosine + H2O = phenol + pyruvate + NH4(+). The chain is Tyrosine phenol-lyase from Nostoc punctiforme (strain ATCC 29133 / PCC 73102).